Here is a 249-residue protein sequence, read N- to C-terminus: 4-hydroxy-tetrahydrodipicolinate reductase (249 aa).

Residues 8–13 (GVTGQM), 87–89 (GTT), and 111–114 (ATNF) each bind NAD(+). His-143 serves as the catalytic Proton donor/acceptor. A (S)-2,3,4,5-tetrahydrodipicolinate-binding site is contributed by His-144. Lys-147 functions as the Proton donor in the catalytic mechanism. 153 to 154 (GT) is a (S)-2,3,4,5-tetrahydrodipicolinate binding site.

This sequence belongs to the DapB family.

The protein localises to the cytoplasm. It catalyses the reaction (S)-2,3,4,5-tetrahydrodipicolinate + NAD(+) + H2O = (2S,4S)-4-hydroxy-2,3,4,5-tetrahydrodipicolinate + NADH + H(+). It carries out the reaction (S)-2,3,4,5-tetrahydrodipicolinate + NADP(+) + H2O = (2S,4S)-4-hydroxy-2,3,4,5-tetrahydrodipicolinate + NADPH + H(+). Its pathway is amino-acid biosynthesis; L-lysine biosynthesis via DAP pathway; (S)-tetrahydrodipicolinate from L-aspartate: step 4/4. In terms of biological role, catalyzes the conversion of 4-hydroxy-tetrahydrodipicolinate (HTPA) to tetrahydrodipicolinate. The sequence is that of 4-hydroxy-tetrahydrodipicolinate reductase from Haloarcula marismortui (strain ATCC 43049 / DSM 3752 / JCM 8966 / VKM B-1809) (Halobacterium marismortui).